The following is a 192-amino-acid chain: Ion-translocating oxidoreductase complex subunit A (192 aa).

6 consecutive transmembrane segments (helical) span residues 5–25, 39–59, 67–87, 102–122, 134–154, and 171–191; these read VLLLVGTVLVNNFVLVKFLGL, IGMGLATTFVLTLASVCAYLV, LGIEYLRTMSFILVIAVVVQF, LLGIFLPLITTNCAVLGVALL, IIYGFGAAVGFSLVLILFASM, and SIAMITAGLMSLAFMGFTGLV.

Belongs to the NqrDE/RnfAE family. In terms of assembly, the complex is composed of six subunits: RnfA, RnfB, RnfC, RnfD, RnfE and RnfG.

It localises to the cell inner membrane. Its function is as follows. Part of a membrane-bound complex that couples electron transfer with translocation of ions across the membrane. This chain is Ion-translocating oxidoreductase complex subunit A, found in Vibrio parahaemolyticus serotype O3:K6 (strain RIMD 2210633).